A 149-amino-acid chain; its full sequence is D-aminoacyl-tRNA deacylase (149 aa).

Positions 139 to 140 (GP) match the Gly-cisPro motif, important for rejection of L-amino acids motif.

It belongs to the DTD family. Homodimer.

It is found in the cytoplasm. It carries out the reaction glycyl-tRNA(Ala) + H2O = tRNA(Ala) + glycine + H(+). The enzyme catalyses a D-aminoacyl-tRNA + H2O = a tRNA + a D-alpha-amino acid + H(+). Its function is as follows. An aminoacyl-tRNA editing enzyme that deacylates mischarged D-aminoacyl-tRNAs. Also deacylates mischarged glycyl-tRNA(Ala), protecting cells against glycine mischarging by AlaRS. Acts via tRNA-based rather than protein-based catalysis; rejects L-amino acids rather than detecting D-amino acids in the active site. By recycling D-aminoacyl-tRNA to D-amino acids and free tRNA molecules, this enzyme counteracts the toxicity associated with the formation of D-aminoacyl-tRNA entities in vivo and helps enforce protein L-homochirality. The sequence is that of D-aminoacyl-tRNA deacylase (dtd1) from Schizosaccharomyces pombe (strain 972 / ATCC 24843) (Fission yeast).